The sequence spans 251 residues: MTSLVSLENVSVSFGQRRVLSDVSLELSPGKILTLLGPNGAGKSTLVRVVLGLVAPDEGVIKHNGQLRIGYVPQKLYLDTTLPLTVNRFLRLRPGTQKTDILPALKRVQAGHLIDAPMQKLSGGETQRVLLARALLNRPQLLVLDEPTQGVDVNGQVALYDLIDQLRRELDCAVLMVSHDLHLVMAKTDEVLCLNHHICCSGAPEVVSMHPEFISMFGPRGAEQLGIYRHHHNHRHDLQGRIVLRRGNGHS.

The ABC transporter domain occupies 5-220; that stretch reads VSLENVSVSF…PEFISMFGPR (216 aa). 37 to 44 is a binding site for ATP; it reads GPNGAGKS.

This sequence belongs to the ABC transporter superfamily. Zinc importer (TC 3.A.1.15.5) family. As to quaternary structure, the complex is composed of two ATP-binding proteins (ZnuC), two transmembrane proteins (ZnuB) and a solute-binding protein (ZnuA).

Its subcellular location is the cell inner membrane. The catalysed reaction is Zn(2+)(out) + ATP(in) + H2O(in) = Zn(2+)(in) + ADP(in) + phosphate(in) + H(+)(in). Its function is as follows. Part of the ABC transporter complex ZnuABC involved in zinc import. Responsible for energy coupling to the transport system. Seems to be important for the virulence. This chain is Zinc import ATP-binding protein ZnuC, found in Salmonella typhimurium (strain LT2 / SGSC1412 / ATCC 700720).